The primary structure comprises 490 residues: MSIRVTQKSYKMSTSGPRAFSSRSFTSGPGARISSSSFSRVGSSSSSFRGSMGTGVGLGGFGGAGVGGITAVTVNQSLLSPLKLEVDPNIQAVRTQEKEQIKSLNNKFASFIDKVRFLEQQNKMLETKWSLLQQQKTSRSNMDNMFESYINNLRRQLEALGQEKLKLEAELGNMQGLVEDFKNKYEDEINKRTEMENEFVLIKKDVDEAYMNKVELESRLEGLTDEINFLRQIHEEEIRELQSQISDTSVVLSMDNSRSLDMDGIIAEVRAQYEDIANRSRAEAETMYQIKYEELQTLAGKHGDDLRRTKTEISEMNRNINRLQAEIEALKGQRASLEAAIADAEQRGEMAIKDAQTKLAELEAALQRAKQDMARQLREYQELMNVKLALDIEITTYRKLLEGEESRLESGMQNMSIHTKTTSGYSGGLSSSYGGLTSPGFSYGMSSFQPGFGSAGGSNTFSRTTKAVVVKKIETRDGKLVSESSDVVSK.

The span at 1–27 shows a compositional bias: polar residues; sequence MSIRVTQKSYKMSTSGPRAFSSRSFTS. The tract at residues 1–48 is disordered; it reads MSIRVTQKSYKMSTSGPRAFSSRSFTSGPGARISSSSFSRVGSSSSSF. Residues 1-96 form a head region; it reads MSIRVTQKSY…DPNIQAVRTQ (96 aa). S9 carries the post-translational modification Phosphoserine; by PKC/PRKCE. K11 participates in a covalent cross-link: Glycyl lysine isopeptide (Lys-Gly) (interchain with G-Cter in SUMO2). Residues S13, S15, S21, and S22 each carry the phosphoserine modification. R23 carries the post-translational modification Omega-N-methylarginine. The residue at position 24 (S24) is a Phosphoserine; by PKC/PRKCE. Phosphothreonine is present on T26. S27 bears the Phosphoserine mark. Residue R32 is modified to Omega-N-methylarginine. A phosphoserine mark is found at S34, S37, and S39. Residues 34 to 48 are compositionally biased toward low complexity; sequence SSSSFSRVGSSSSSF. Residue R40 is modified to Omega-N-methylarginine. Phosphoserine occurs at positions 43, 44, and 47. Asymmetric dimethylarginine; alternate is present on R49. Residue R49 is modified to Omega-N-methylarginine; alternate. S51 bears the Phosphoserine mark. Residue S80 is modified to Phosphoserine; by MAPK. The segment at 97-132 is coil 1A; that stretch reads EKEQIKSLNNKFASFIDKVRFLEQQNKMLETKWSLL. The region spanning 97–408 is the IF rod domain; sequence EKEQIKSLNN…KLLEGEESRL (312 aa). N6-malonyllysine is present on K107. Residues K128 and K136 each participate in a glycyl lysine isopeptide (Lys-Gly) (interchain with G-Cter in SUMO2) cross-link. The tract at residues 133–149 is linker 1; sequence QQQKTSRSNMDNMFESY. A coil 1B region spans residues 150–241; that stretch reads INNLRRQLEA…QIHEEEIREL (92 aa). K203 participates in a covalent cross-link: Glycyl lysine isopeptide (Lys-Gly) (interchain with G-Cter in SUMO1); alternate. A Glycyl lysine isopeptide (Lys-Gly) (interchain with G-Cter in SUMO2); alternate cross-link involves residue K203. K213 bears the N6-acetyllysine mark. The linker 12 stretch occupies residues 242–265; sequence QSQISDTSVVLSMDNSRSLDMDGI. Phosphoserine occurs at positions 259 and 280. The tract at residues 266-403 is coil 2; sequence IAEVRAQYED…ITTYRKLLEG (138 aa). The necessary for interaction with PNN stretch occupies residues 267–387; it reads AEVRAQYEDI…REYQELMNVK (121 aa). Residue K291 forms a Glycyl lysine isopeptide (Lys-Gly) (interchain with G-Cter in SUMO2) linkage. Residue K301 forms a Glycyl lysine isopeptide (Lys-Gly) (interchain with G-Cter in SUMO2); alternate linkage. K301 carries the post-translational modification N6-acetyllysine; alternate. A Glycyl lysine isopeptide (Lys-Gly) (interchain with G-Cter in SUMO2) cross-link involves residue K310. K331 is covalently cross-linked (Glycyl lysine isopeptide (Lys-Gly) (interchain with G-Cter in SUMO2); alternate). K331 carries the N6-acetyllysine; alternate modification. S336 carries the phosphoserine modification. K399 participates in a covalent cross-link: Glycyl lysine isopeptide (Lys-Gly) (interchain with G-Cter in SUMO2). The tract at residues 404–490 is tail; sequence EESRLESGMQ…VSESSDVVSK (87 aa). S406, S410, S416, S423, S430, S432, and S438 each carry phosphoserine. K479 participates in a covalent cross-link: Glycyl lysine isopeptide (Lys-Gly) (interchain with G-Cter in SUMO1); alternate. K479 is covalently cross-linked (Glycyl lysine isopeptide (Lys-Gly) (interchain with G-Cter in SUMO2); alternate). Phosphoserine occurs at positions 482, 484, 485, and 489.

This sequence belongs to the intermediate filament family. In terms of assembly, heterotetramer of two type I and two type II keratins. Forms a heterodimer with KRT18. Associates with KRT20. Interacts with PLEC isoform 1C, when in a heterodimer with KRT18. Interacts with PNN. When associated with KRT19, interacts with DMD. Interacts with TCHP. Interacts with APEX1. Interacts with GPER1. Interacts with EPPK1. Interacts with PKP1 and PKP2. Post-translationally, phosphorylation on serine residues is enhanced during EGF stimulation and mitosis. Ser-80 phosphorylation plays an important role in keratin filament reorganization. In terms of processing, O-glycosylated. O-GlcNAcylation at multiple sites increases solubility, and decreases stability by inducing proteasomal degradation. O-glycosylated (O-GlcNAcylated), in a cell cycle-dependent manner. As to expression, expressed in abundance in the epithelia of colon, bladder, ileum, and stomach, with lower expression observed in earskin (at protein level). Also expressed in pancreas, liver, dudenum and jejunum.

The protein localises to the cytoplasm. It is found in the nucleus. It localises to the nucleoplasm. Its subcellular location is the nucleus matrix. Together with KRT19, helps to link the contractile apparatus to dystrophin at the costameres of striated muscle. This is Keratin, type II cytoskeletal 8 (Krt8) from Mus musculus (Mouse).